The chain runs to 503 residues: MALWAKARVWMAGPWLSLHRARPLGTRASAAPKAVLPFEAMPRCPGNKWMRVLQIWKEQGSENMHLDMHQTFQELGPIFRYDVGGRHMVFVMLPEDVERLQQAESLHPQRMLLEPWLAYRQARGHKCGVFLLNGPQWRLDRLRLNPDVLSLPALQKYTPLVDGVARDFSQTLKARVLQNARGSLTLDIAPSVFRYTIEASTLVLYGERLGLLTQQPNPDSLNFIHALEAMFKSTVQLMFVPRRLSRWTSSSMWREHFEAWDYIFQYANRAIQRIYQELALGHPWHYSGIVAELLMRADMTLDTIKANTIDLTAGSVDTTAFPLLMTLFELARNPEVQQALRQESLVAEARISENPQRATTELPLLRAALKETLRLYPVGITLERQVSSDLVLQNYHIPAGTLVKVLLYSLGRNPAVFARPESYHPQRWLDRQGSGSRFPHLAFGFGMRQCLGRRVAEVEMLLLLHHVLKNFLVETLAQEDIKMVYRFILMPSTLPLFTFRAIQ.

The N-terminal 24 residues, 1 to 24, are a transit peptide targeting the mitochondrion; that stretch reads MALWAKARVWMAGPWLSLHRARPL. Residue Cys450 coordinates heme.

It belongs to the cytochrome P450 family. Heme is required as a cofactor.

The protein localises to the mitochondrion inner membrane. The catalysed reaction is a steroid + 2 reduced [adrenodoxin] + O2 + 2 H(+) = an 11beta-hydroxysteroid + 2 oxidized [adrenodoxin] + H2O. It catalyses the reaction 11-deoxycortisol + 2 reduced [adrenodoxin] + O2 + 2 H(+) = cortisol + 2 oxidized [adrenodoxin] + H2O. The enzyme catalyses 21-hydroxyprogesterone + 2 reduced [adrenodoxin] + O2 + 2 H(+) = corticosterone + 2 oxidized [adrenodoxin] + H2O. It carries out the reaction corticosterone + 2 reduced [adrenodoxin] + O2 + 2 H(+) = 18-hydroxycorticosterone + 2 oxidized [adrenodoxin] + H2O. The catalysed reaction is 18-hydroxycorticosterone + 2 reduced [adrenodoxin] + O2 + 2 H(+) = aldosterone + 2 oxidized [adrenodoxin] + 2 H2O. It catalyses the reaction 21-hydroxyprogesterone + 2 reduced [adrenodoxin] + O2 + 2 H(+) = 19-hydroxy-11-deoxycorticosterone + 2 oxidized [adrenodoxin] + H2O. The enzyme catalyses 19-hydroxy-11-deoxycorticosterone + 2 reduced [adrenodoxin] + O2 + 2 H(+) = 19-oxo-11-deoxycorticosterone + 2 oxidized [adrenodoxin] + 2 H2O. It participates in steroid biosynthesis; glucocorticoid biosynthesis. It functions in the pathway steroid hormone biosynthesis. In terms of biological role, a cytochrome P450 monooxygenase that catalyzes the biosynthesis of aldosterone and other adrenal corticoids. Differing from other species (such as human, rat and mice), it is able to catalyze three sequential oxidative reactions of 11-deoxycorticosterone (21-hydroxyprogesterone), namely 11-beta hydroxylation, followed by two successive oxidations at C18 yielding 18-hydroxy and then 18-oxo intermediates, and ending with the formation of aldosterone. Steroid 11beta, 18- and 19-hydroxylase. Mechanistically, uses molecular oxygen inserting one oxygen atom into a substrate and reducing the second into a water molecule. Two electrons are provided by NADPH via a two-protein mitochondrial transfer system comprising flavoprotein FDXR (adrenodoxin/ferredoxin reductase) and nonheme iron-sulfur protein FDX1 or FDX2 (adrenodoxin/ferredoxin). The polypeptide is Cytochrome P450 11B1, mitochondrial (CYP11B1) (Ovis aries (Sheep)).